The sequence spans 466 residues: 3-isopropylmalate dehydratase large subunit (466 aa).

Residues Cys-347, Cys-407, and Cys-410 each coordinate [4Fe-4S] cluster.

This sequence belongs to the aconitase/IPM isomerase family. LeuC type 1 subfamily. Heterodimer of LeuC and LeuD. [4Fe-4S] cluster serves as cofactor.

It catalyses the reaction (2R,3S)-3-isopropylmalate = (2S)-2-isopropylmalate. It functions in the pathway amino-acid biosynthesis; L-leucine biosynthesis; L-leucine from 3-methyl-2-oxobutanoate: step 2/4. Functionally, catalyzes the isomerization between 2-isopropylmalate and 3-isopropylmalate, via the formation of 2-isopropylmaleate. The sequence is that of 3-isopropylmalate dehydratase large subunit from Escherichia coli O127:H6 (strain E2348/69 / EPEC).